Consider the following 843-residue polypeptide: MKLVQREAEKLALHNAGFLAQKRLARGLRLNYTEAVALIAAQILEFVRDGDRTVTDLMDLGKQLLGRRQVLPAVPHLLETVQVEGTFMDGTKLITVHDPISSDDGNLELALHGSFLPVPSLEKFSSVGVDDFPGEVRFCSGHIVLNLHRRALTLKVVNKADRPIQIGSHYHFIEANPYLVFDRQRAYGMRLNIPAGTAVRFEPGDAKTVTLVSIGGRKVIRGGNGIADGAVNRSQLNEVMEKVIAKGFGHEDYPDSSEGIIGDGTHDYIVDHEKYASMYGPTTGDKIRLGDTDLFAEIEKDYAIYGDECIFGGGKVLRDGMGQSAGYPASDCLDTVVTNAVVIDYTGIYKADIGINGGLIVAIGKAGNPDVMDMDGVNEEMIVGVNTEVIAAEGMIVTAGGIDCHVHFICPQLAEEAIASGITTLVGGGTGPAHGTCATTCTPSPSHMKLMLQSTDELPINMGFTGKGNTTKPDGLAEIIKAGAMGLKLHEDWGSTPAAIDNCLSVAEAFDIQVNIHTDTLNESGCVEHTIAAFKDRTIHTYHSEGAGGGHAPDIIKVCGVKNVLPSSTNPTRPFTLNTVDEHLDMLMVCHHLDRNIPEDVAFAESRIRAETIAAEDILHDMGAISIISSDSQAMGRIGEVITRTWQTANKMKRQRGRLPISSSPDAAEDNDNFRIRRYIAKYTINPAIVNGFSDFVGSVEVGKLADLVIWKPSFFGAKPEMVIKGGAIACANMGDPNASIPTPEPVMMRPMFGAFGGAGSANSIAFVSKAAKEAGVAVQYKLGKRVEAVGRVRGLTKLNMKLNDALPKIDVDPETYTVTADGEVLRCQPTPTVPLSRNYFLF.

One can recognise a Urease domain in the interval 400 to 843 (GGIDCHVHFI…VPLSRNYFLF (444 aa)). Residues His-405, His-407, and Lys-488 each contribute to the Ni(2+) site. Lys-488 carries the N6-carboxylysine modification. Residue His-490 coordinates substrate. Ni(2+) contacts are provided by His-517 and His-543. His-591 acts as the Proton donor in catalysis. Asp-631 is a Ni(2+) binding site.

In the C-terminal section; belongs to the metallo-dependent hydrolases superfamily. Urease alpha subunit family. Homohexamer. Other oligomeric forms may exist depending on pH and presence of salts. Ni(2+) serves as cofactor. Post-translationally, carboxylation allows a single lysine to coordinate two nickel ions.

It carries out the reaction urea + 2 H2O + H(+) = hydrogencarbonate + 2 NH4(+). Its pathway is nitrogen metabolism; urea degradation; CO(2) and NH(3) from urea (urease route): step 1/1. In terms of biological role, urea hydrolase involved in nitrogen recycling from ureide, purine, and arginine catabolism. The polypeptide is Urease (Oryza sativa subsp. indica (Rice)).